The primary structure comprises 565 residues: Membrane protein insertase YidC (565 aa).

6 helical membrane-spanning segments follow: residues 6-26 (VLLI…WSKN), 348-368 (LMAL…SLLH), 370-390 (WGWA…PLSA), 437-457 (GGCF…WVLV), 479-499 (PYFI…KLTP), and 516-536 (PLIF…YWVI).

Belongs to the OXA1/ALB3/YidC family. Type 1 subfamily. In terms of assembly, interacts with the Sec translocase complex via SecD. Specifically interacts with transmembrane segments of nascent integral membrane proteins during membrane integration.

Its subcellular location is the cell inner membrane. Functionally, required for the insertion and/or proper folding and/or complex formation of integral membrane proteins into the membrane. Involved in integration of membrane proteins that insert both dependently and independently of the Sec translocase complex, as well as at least some lipoproteins. Aids folding of multispanning membrane proteins. This is Membrane protein insertase YidC from Xylella fastidiosa (strain M23).